We begin with the raw amino-acid sequence, 407 residues long: Probable 2,3-bisphosphoglycerate-independent phosphoglycerate mutase (407 aa).

The tract at residues 175–200 (GSDAINDTDPQQVGKEPLEPKGENPN) is disordered.

Belongs to the BPG-independent phosphoglycerate mutase family. A-PGAM subfamily.

It carries out the reaction (2R)-2-phosphoglycerate = (2R)-3-phosphoglycerate. The protein operates within carbohydrate degradation; glycolysis; pyruvate from D-glyceraldehyde 3-phosphate: step 3/5. Catalyzes the interconversion of 2-phosphoglycerate and 3-phosphoglycerate. This chain is Probable 2,3-bisphosphoglycerate-independent phosphoglycerate mutase, found in Aquifex aeolicus (strain VF5).